Reading from the N-terminus, the 100-residue chain is Large ribosomal subunit protein bL21 (100 aa).

Belongs to the bacterial ribosomal protein bL21 family. Part of the 50S ribosomal subunit. Contacts protein L20.

Its function is as follows. This protein binds to 23S rRNA in the presence of protein L20. The protein is Large ribosomal subunit protein bL21 of Mycoplasma genitalium (strain ATCC 33530 / DSM 19775 / NCTC 10195 / G37) (Mycoplasmoides genitalium).